The chain runs to 61 residues: Large ribosomal subunit protein uL29 (61 aa).

It belongs to the universal ribosomal protein uL29 family.

In Nitratidesulfovibrio vulgaris (strain DSM 19637 / Miyazaki F) (Desulfovibrio vulgaris), this protein is Large ribosomal subunit protein uL29.